Reading from the N-terminus, the 737-residue chain is MSNPKQEQHLSQDLLRIITATHHDPFEVLGRHSLPVPTATADTLVRVYLPGARSAELVINRQNRQIAPLNRLPGTDFFEWYGLGQQLPVHYQIEWYDRHNQHRVHYDPYAFAPQLGELDMHLFAEGQHWNIYNLLGAHPRQVDGINGVLFATWAPNAERISVVGNFNDWDGRHHPMRVRGSSGLWELFIPGVQPGDLYKFEIRNRQTGAVFLKSDPYGQSFEHRPSTSSIITADSAFAWQDADWMEHRAHWDWQASPLSIYEVHLGSWRRGWAGEFLSYRELAHQLADYVKYMGFTHVEILPVSEHPLDDSWGYQTTGYYAPTSRFGSPDDFRYFVDHLHQQGIGIILDWVPAHFPKDAHALARFDGSALYEHEDPRLGEHRDWGTLIYNYGRSEVRNFLLANALFWLKEYHIDGLRVDAVASMLHLDYSRQPGEWIPNIHGGNENLEAMTFLQQLNAICHGQHSGALVIAEESTAWPQVTRPTWVGGLGFSMKWNMGWMHDTLEYMSREPVHRQYHHNQLTFGMMYAFTENFQLPFSHDEVVHGKGSMINKMPGDDWQKFANLRLLYTYLYTYPGSKLLFMGGEFAQWSEWAHGRSLDWHLLDYGPHQGVQSAVKDLNHLYRQVPSLYQRNFRGDGFEWIDCHDSTQSIISYIRSSDSEFTLVILNFTPVPRYNYRIGVPVAGQYQEVFNSDSQFYGGSNLGNANPLYTQPVPWMNHGQSLEVTLPPLGGLLLKLA.

The active-site Nucleophile is the D419. Catalysis depends on E472, which acts as the Proton donor.

The protein belongs to the glycosyl hydrolase 13 family. GlgB subfamily. In terms of assembly, monomer.

It carries out the reaction Transfers a segment of a (1-&gt;4)-alpha-D-glucan chain to a primary hydroxy group in a similar glucan chain.. The protein operates within glycan biosynthesis; glycogen biosynthesis. In terms of biological role, catalyzes the formation of the alpha-1,6-glucosidic linkages in glycogen by scission of a 1,4-alpha-linked oligosaccharide from growing alpha-1,4-glucan chains and the subsequent attachment of the oligosaccharide to the alpha-1,6 position. The polypeptide is 1,4-alpha-glucan branching enzyme GlgB (Cellvibrio japonicus (strain Ueda107) (Pseudomonas fluorescens subsp. cellulosa)).